Reading from the N-terminus, the 221-residue chain is Riboflavin kinase (221 aa).

The H-T-H motif-like stretch occupies residues 1–89 (MENIYIALKT…ISSILRFSQE (89 aa)). A riboflavin kinase region spans residues 90–221 (LKLVGAVQDG…EVLASIDGKL (132 aa)). 99-104 (GLGEGK) provides a ligand contact to CDP. Positions 128 and 130 each coordinate Mg(2+). FMN is bound by residues Ser-185 and Glu-192. A CDP-binding site is contributed by 197 to 200 (KYLR).

The protein belongs to the archaeal riboflavin kinase family. Mg(2+) serves as cofactor.

The enzyme catalyses riboflavin + CTP = CDP + FMN + H(+). It participates in cofactor biosynthesis; FMN biosynthesis; FMN from riboflavin (CTP route): step 1/1. In terms of biological role, catalyzes the CTP-dependent phosphorylation of riboflavin (vitamin B2) to form flavin mononucleotide (FMN). This Picrophilus torridus (strain ATCC 700027 / DSM 9790 / JCM 10055 / NBRC 100828 / KAW 2/3) protein is Riboflavin kinase (ribK).